A 355-amino-acid polypeptide reads, in one-letter code: Ribosomal RNA small subunit methyltransferase H (355 aa).

S-adenosyl-L-methionine contacts are provided by residues 47 to 49 (GGY), D65, F92, D113, and Q120. Positions 332 to 355 (LLPLATLPETSHPKSASHSKSRRR) are disordered. Residues 346–355 (SASHSKSRRR) show a composition bias toward basic residues.

Belongs to the methyltransferase superfamily. RsmH family.

Its subcellular location is the cytoplasm. The catalysed reaction is cytidine(1402) in 16S rRNA + S-adenosyl-L-methionine = N(4)-methylcytidine(1402) in 16S rRNA + S-adenosyl-L-homocysteine + H(+). In terms of biological role, specifically methylates the N4 position of cytidine in position 1402 (C1402) of 16S rRNA. This chain is Ribosomal RNA small subunit methyltransferase H, found in Beijerinckia indica subsp. indica (strain ATCC 9039 / DSM 1715 / NCIMB 8712).